We begin with the raw amino-acid sequence, 98 residues long: Putative protein adenylyltransferase MJ0128 (98 aa).

Residues 31 to 45 (GSYARNEQTEKSDID) carry the GSX(10)DXD motif motif. Asp-43, Asp-45, and Asp-75 together coordinate Mg(2+).

This sequence belongs to the MntA antitoxin family. Probably forms a complex with cognate toxin MJ0127. Mg(2+) serves as cofactor.

The catalysed reaction is L-tyrosyl-[protein] + ATP = O-(5'-adenylyl)-L-tyrosyl-[protein] + diphosphate. It carries out the reaction O-(5'-adenylyl)-L-tyrosyl-[protein] + ATP = O-[5'-(adenylyl-(5'-&gt;3')-adenylyl)]-L-tyrosyl-[protein] + diphosphate. In terms of biological role, probable antitoxin component of a putative type VII toxin-antitoxin (TA) system. Neutralizes cognate toxic MJ0127 by di-AMPylation. The polypeptide is Putative protein adenylyltransferase MJ0128 (Methanocaldococcus jannaschii (strain ATCC 43067 / DSM 2661 / JAL-1 / JCM 10045 / NBRC 100440) (Methanococcus jannaschii)).